A 198-amino-acid polypeptide reads, in one-letter code: RNA 2',3'-cyclic phosphodiesterase (198 aa).

The active-site Proton donor is His-39. 2 consecutive short sequence motifs (HXTX) follow at residues 39–42 (HLTL) and 130–133 (HITL). The active-site Proton acceptor is His-130.

The protein belongs to the 2H phosphoesterase superfamily. ThpR family.

The enzyme catalyses a 3'-end 2',3'-cyclophospho-ribonucleotide-RNA + H2O = a 3'-end 2'-phospho-ribonucleotide-RNA + H(+). Hydrolyzes RNA 2',3'-cyclic phosphodiester to an RNA 2'-phosphomonoester. This is RNA 2',3'-cyclic phosphodiesterase from Thermus thermophilus (strain ATCC 27634 / DSM 579 / HB8).